The following is a 554-amino-acid chain: (E)-nerolidol synthase TPS18VF (554 aa).

5 residues coordinate (2E,6E)-farnesyl diphosphate: arginine 276, aspartate 313, aspartate 317, arginine 455, and aspartate 458. Aspartate 313 and aspartate 317 together coordinate Mg(2+). A DDXXD motif motif is present at residues 313–317 (DDIFD). Positions 458, 462, and 466 each coordinate Mg(2+).

The protein belongs to the terpene synthase family. Tpsb subfamily. Requires Mg(2+) as cofactor. The cofactor is Mn(2+). In terms of tissue distribution, highly expressed in glandular trichomes.

The catalysed reaction is (2E,6E)-farnesyl diphosphate + H2O = (6E)-nerolidol + diphosphate. The enzyme catalyses (2E)-geranyl diphosphate + H2O = (S)-linalool + diphosphate. It participates in secondary metabolite biosynthesis; terpenoid biosynthesis. Functionally, involved in sesquiterpene olefins biosynthesis, constituants of cannabinoids and terpenoids-rich resins. Catalyzes primarily the conversion of (2E)-farnesyl diphosphate to (E)-nerolidol, and the conversion of (2E)-geranyl diphosphate to (+)linalool. This is (E)-nerolidol synthase TPS18VF from Cannabis sativa (Hemp).